A 1411-amino-acid chain; its full sequence is DNA-directed RNA polymerase subunit beta' (1411 aa).

4 residues coordinate Zn(2+): cysteine 70, cysteine 72, cysteine 85, and cysteine 88. Aspartate 460, aspartate 462, and aspartate 464 together coordinate Mg(2+). Cysteine 814, cysteine 888, cysteine 895, and cysteine 898 together coordinate Zn(2+).

This sequence belongs to the RNA polymerase beta' chain family. As to quaternary structure, the RNAP catalytic core consists of 2 alpha, 1 beta, 1 beta' and 1 omega subunit. When a sigma factor is associated with the core the holoenzyme is formed, which can initiate transcription. It depends on Mg(2+) as a cofactor. Zn(2+) serves as cofactor.

The catalysed reaction is RNA(n) + a ribonucleoside 5'-triphosphate = RNA(n+1) + diphosphate. Functionally, DNA-dependent RNA polymerase catalyzes the transcription of DNA into RNA using the four ribonucleoside triphosphates as substrates. The sequence is that of DNA-directed RNA polymerase subunit beta' from Idiomarina loihiensis (strain ATCC BAA-735 / DSM 15497 / L2-TR).